The sequence spans 274 residues: RNA polymerase sigma factor SigI4 (274 aa).

Positions 87–100 (EEYSVGLMAFNEAI) match the Polymerase core binding motif. Residues 226-245 (LSELMGLVNVHRKTVERNRK) constitute a DNA-binding region (H-T-H motif).

This sequence belongs to the sigma-70 factor family. SigI subfamily. Interacts with RsgI4.

The protein resides in the cytoplasm. With respect to regulation, negatively regulated by the anti-sigma-I factor RsgI4. Binding of the polysaccharide substrate to RsgI4 may lead to the release and activation of SigI4. Sigma factors are initiation factors that promote the attachment of RNA polymerase to specific initiation sites and are then released. This sigma factor is involved in regulation of cellulosomal genes via an external polysaccharide-sensing mechanism. The chain is RNA polymerase sigma factor SigI4 from Acetivibrio thermocellus (strain ATCC 27405 / DSM 1237 / JCM 9322 / NBRC 103400 / NCIMB 10682 / NRRL B-4536 / VPI 7372) (Clostridium thermocellum).